The following is a 374-amino-acid chain: Palmitoyltransferase PFA5 (374 aa).

Residues 1-13 are Cytoplasmic-facing; the sequence is MALSWNIRIRRRS. The helical transmembrane segment at 14-34 threads the bilayer; sequence WFRFILPIIVLGLLCYGTWAY. Residues 35–55 are Lumenal-facing; the sequence is CHKLCYEQVDKRLRQKSVSVG. The chain crosses the membrane as a helical span at residues 56-76; the sequence is LICAVCFLDVVVIFIWLQIVI. Over 77–173 the chain is Cytoplasmic; sequence LVGPGTQPHV…TVIGRDNYRL (97 aa). Residues 129 to 179 enclose the DHHC domain; the sequence is IWCSECQSLKMERTHHSSELGHCIPRFDHYCMWIGTVIGRDNYRLFVQFAA. The chain crosses the membrane as a helical span at residues 174 to 194; the sequence is FVQFAAYFSTLLLIMWVSICV. At 195-217 the chain is on the lumenal side; it reads YIRIITQHNHNYSPNLNANIIST. The chain crosses the membrane as a helical span at residues 218–238; that stretch reads LVFAILGWLLTASLLASSIFY. Residues 239-374 lie on the Cytoplasmic side of the membrane; that stretch reads MSQNKTSLEA…ASGDDSDPAY (136 aa).

Belongs to the DHHC palmitoyltransferase family. PFA5 subfamily. Post-translationally, autopalmitoylated.

The protein localises to the membrane. The enzyme catalyses L-cysteinyl-[protein] + hexadecanoyl-CoA = S-hexadecanoyl-L-cysteinyl-[protein] + CoA. The polypeptide is Palmitoyltransferase PFA5 (PFA5) (Saccharomyces cerevisiae (strain ATCC 204508 / S288c) (Baker's yeast)).